We begin with the raw amino-acid sequence, 223 residues long: Transmembrane protein 235 (223 aa).

A signal peptide spans 1 to 28 (MARLGALLLAAALGALLSFALLAAAVAS). The N-linked (GlcNAc...) asparagine glycan is linked to Asn41. 3 helical membrane passes run 96 to 116 (VIVVLPLSLVLLVCGWICGLL), 126 to 146 (LLFTGCYFLLGSVLTLAGVSI), and 176 to 196 (WSMALAWGSCALEAFSGTLLL).

It belongs to the PMP-22/EMP/MP20 family. Post-translationally, N-glycosylated.

Its subcellular location is the membrane. The protein localises to the endoplasmic reticulum. In Homo sapiens (Human), this protein is Transmembrane protein 235 (TMEM235).